A 211-amino-acid chain; its full sequence is Troponin I, cardiac muscle (211 aa).

A disordered region spans residues 1-23 (MADESGDAAGCPPPAPAPIRRQS). Residue A2 is modified to N-acetylalanine. Residue S5 is modified to Phosphoserine. S23 and S24 each carry phosphoserine; by PKA and PKD/PRKD1. Position 27 is a phosphotyrosine (Y27). Phosphothreonine; by STK4/MST1 is present on T32. An involved in binding TNC region spans residues 33–80 (EPHAKKKSKISASRKLQLKTLMLQIAKQELEREAEERRGEKGRALSTR). Phosphoserine; by PKC/PRKCE is present on residues S43 and S45. T52 carries the phosphothreonine; by STK4/MST1 modification. S78 carries the post-translational modification Phosphoserine. Position 79 is a phosphothreonine (T79). 2 positions are modified to phosphothreonine; by STK4/MST1: T130 and T144. The tract at residues 130 to 150 (TQKIFDLRGKFKRPTLRRVRI) is involved in binding TNC and actin. A Phosphoserine; by PAK3 modification is found at S151. Residue S167 is modified to Phosphoserine. T182 is subject to Phosphothreonine. S200 is subject to Phosphoserine.

Belongs to the troponin I family. In terms of assembly, binds to actin and tropomyosin. Interacts with TRIM63. Interacts with STK4/MST1. In terms of processing, phosphorylated at Ser-23 and Ser-24 by PRKD1; phosphorylation reduces myofilament calcium sensitivity. Phosphorylated preferentially at Thr-32. Phosphorylation by STK4/MST1 alters its binding affinity to TNNC1 (cardiac Tn-C) and TNNT2 (cardiac Tn-T). Phosphorylated at Ser-43 and Ser-45 by PRKCE; phosphorylation increases myocardium contractile dysfunction.

Functionally, troponin I is the inhibitory subunit of troponin, the thin filament regulatory complex which confers calcium-sensitivity to striated muscle actomyosin ATPase activity. The sequence is that of Troponin I, cardiac muscle (TNNI3) from Canis lupus familiaris (Dog).